A 198-amino-acid polypeptide reads, in one-letter code: dCTP deaminase (198 aa).

Residues Arg-99–Arg-104, Thr-125–Glu-127, and Gln-144 each bind dCTP. Glu-127 functions as the Proton donor/acceptor in the catalytic mechanism.

It belongs to the dCTP deaminase family. As to quaternary structure, homotrimer.

The catalysed reaction is dCTP + H2O + H(+) = dUTP + NH4(+). Its pathway is pyrimidine metabolism; dUMP biosynthesis; dUMP from dCTP (dUTP route): step 1/2. Catalyzes the deamination of dCTP to dUTP. In Rhodopirellula baltica (strain DSM 10527 / NCIMB 13988 / SH1), this protein is dCTP deaminase.